A 907-amino-acid polypeptide reads, in one-letter code: Protein translocase subunit SecA (907 aa).

ATP contacts are provided by residues glutamine 87, 105–109 (GEGKT), and aspartate 510. Zn(2+) contacts are provided by cysteine 892, cysteine 894, cysteine 903, and histidine 904.

Belongs to the SecA family. Monomer and homodimer. Part of the essential Sec protein translocation apparatus which comprises SecA, SecYEG and auxiliary proteins SecDF-YajC and YidC. Zn(2+) serves as cofactor.

Its subcellular location is the cell inner membrane. It localises to the cytoplasm. The catalysed reaction is ATP + H2O + cellular proteinSide 1 = ADP + phosphate + cellular proteinSide 2.. In terms of biological role, part of the Sec protein translocase complex. Interacts with the SecYEG preprotein conducting channel. Has a central role in coupling the hydrolysis of ATP to the transfer of proteins into and across the cell membrane, serving both as a receptor for the preprotein-SecB complex and as an ATP-driven molecular motor driving the stepwise translocation of polypeptide chains across the membrane. In Acinetobacter baumannii (strain ATCC 17978 / DSM 105126 / CIP 53.77 / LMG 1025 / NCDC KC755 / 5377), this protein is Protein translocase subunit SecA.